The sequence spans 210 residues: Thymidylate kinase (210 aa).

11-18 (GVDGSGKS) contributes to the ATP binding site.

Belongs to the thymidylate kinase family.

It catalyses the reaction dTMP + ATP = dTDP + ADP. Functionally, phosphorylation of dTMP to form dTDP in both de novo and salvage pathways of dTTP synthesis. The chain is Thymidylate kinase from Mycoplasmoides gallisepticum (strain R(low / passage 15 / clone 2)) (Mycoplasma gallisepticum).